The primary structure comprises 177 residues: MINLHNAENEKEAEMQIGTPTDVKHVAHIGWDGGSVNHNPPSWMKDFKVLGGYSPALIGNIKEDASCIFEDSTRSRDIPRLPKSSRERSSTLGGSPTKERSRRRGSSQYNGNPKVSRRSSKESSAIPQDGGFNKKSRRKKSKDCVDGGSRRSSRRVRGSQVESISDSSSTSDAGYLT.

The CRIB domain occupies 17-30 (IGTPTDVKHVAHIG). Residues 72–89 (STRSRDIPRLPKSSRERS) are compositionally biased toward basic and acidic residues. Positions 72-177 (STRSRDIPRL…SSTSDAGYLT (106 aa)) are disordered. A compositionally biased stretch (low complexity) spans 158–171 (GSQVESISDSSSTS).

Its function is as follows. Functions as a downstream effector of Rho-related GTP binding proteins of the 'Rho of Plants' (ROPs) family. Participates in the propagation of ROP GTPase signals in specific cellular responses. The sequence is that of CRIB domain-containing protein RIC8 (RIC8) from Arabidopsis thaliana (Mouse-ear cress).